A 397-amino-acid polypeptide reads, in one-letter code: Purine ribonucleoside efflux pump NepI (397 aa).

Over 1-21 the chain is Cytoplasmic; that stretch reads MNENIAEKFRADGVARPNWSA. Residues 22–42 form a helical membrane-spanning segment; sequence VFAVAFCVACLITVEFLPVSL. Topologically, residues 43 to 54 are periplasmic; sequence LTPMAQDLGISE. The chain crosses the membrane as a helical span at residues 55–75; sequence GIAGQSVTVTAFVAMFSSLFI. Residues 76-85 lie on the Cytoplasmic side of the membrane; that stretch reads TQIIQATDRR. A helical membrane pass occupies residues 86-106; the sequence is YIVILFAVLLTASCLMVSFAN. Position 107 (serine 107) is a topological domain, periplasmic. A helical transmembrane segment spans residues 108 to 128; sequence FTLLLLGRACLGLALGGFWAM. Over 129 to 147 the chain is Cytoplasmic; that stretch reads SASLTMRLVPARTVPKALS. A helical membrane pass occupies residues 148–168; sequence VIFGAVSIALVIAAPLGSFLG. Topologically, residues 169–175 are periplasmic; it reads GIIGWRN. Residues 176-196 traverse the membrane as a helical segment; sequence VFNAAAVMGVLCVIWVVKSLP. At 197 to 215 the chain is on the cytoplasmic side; sequence SLPGEPSHQKQNMFSLLQR. Residues 216 to 236 form a helical membrane-spanning segment; sequence PGVMAGMIAIFMSFAGQFAFF. The Periplasmic segment spans residues 237–255; sequence TYIRPVYMNLAGFDVDGLT. Residues 256-276 traverse the membrane as a helical segment; sequence LVLLSFGIASFVGTSFSSYVL. Residues 277–281 are Cytoplasmic-facing; sequence KRSVK. The helical transmembrane segment at 282-302 threads the bilayer; sequence LALAGAPLLLALSALTLIVWG. Residues 303-305 lie on the Periplasmic side of the membrane; sequence SDK. The helical transmembrane segment at 306–326 threads the bilayer; that stretch reads TVAAVIAIIWGLAFALVPVGW. Residues 327-343 lie on the Cytoplasmic side of the membrane; it reads STWITRSLADQAEKAGS. A helical transmembrane segment spans residues 344–364; that stretch reads IQVAVIQLANTCGAAVGGYAL. At 365-366 the chain is on the periplasmic side; it reads DN. The chain crosses the membrane as a helical span at residues 367 to 387; it reads FGLLSPLALSGCLMLLTALVV. The Cytoplasmic segment spans residues 388-397; it reads AAKVRITPMS.

Belongs to the major facilitator superfamily. DHA1 family. NepI (TC 2.A.1.2.26) subfamily.

The protein resides in the cell inner membrane. The catalysed reaction is inosine(in) + H(+)(out) = inosine(out) + H(+)(in). The enzyme catalyses guanosine(in) + H(+)(out) = guanosine(out) + H(+)(in). Involved in the efflux of purine ribonucleosides, such as inosine and guanosine. The chain is Purine ribonucleoside efflux pump NepI from Salmonella enteritidis PT4 (strain P125109).